The primary structure comprises 1435 residues: DNA polymerase III PolC-type (1435 aa).

The 159-residue stretch at 404 to 562 (YVVYDIETTG…YDSSVLTNIF (159 aa)) folds into the Exonuclease domain.

This sequence belongs to the DNA polymerase type-C family. PolC subfamily.

The protein localises to the cytoplasm. The enzyme catalyses DNA(n) + a 2'-deoxyribonucleoside 5'-triphosphate = DNA(n+1) + diphosphate. In terms of biological role, required for replicative DNA synthesis. This DNA polymerase also exhibits 3' to 5' exonuclease activity. This chain is DNA polymerase III PolC-type, found in Mycoplasmopsis pulmonis (strain UAB CTIP) (Mycoplasma pulmonis).